The sequence spans 423 residues: Putative transmembrane protein ORF103 (423 aa).

The segment covering Glu43–Val57 has biased composition (basic and acidic residues). The interval Glu43–Arg91 is disordered. Residues Lys67 to Glu84 are compositionally biased toward acidic residues. Helical transmembrane passes span Ile125–Leu145 and Phe162–Ile182. Residues Asp253–Lys282 form a disordered region. The next 2 helical transmembrane spans lie at Leu326–Ser346 and Ile366–Leu386.

The protein localises to the host membrane. The chain is Putative transmembrane protein ORF103 from Magallana gigas (Pacific oyster).